The primary structure comprises 284 residues: NAD kinase (284 aa).

The active-site Proton acceptor is aspartate 70. NAD(+) is bound by residues 70–71, 139–140, lysine 167, aspartate 169, leucine 177, 180–185, and glutamine 236; these read DG, NE, and TAYNLS.

Belongs to the NAD kinase family. The cofactor is a divalent metal cation.

The protein localises to the cytoplasm. It carries out the reaction NAD(+) + ATP = ADP + NADP(+) + H(+). Functionally, involved in the regulation of the intracellular balance of NAD and NADP, and is a key enzyme in the biosynthesis of NADP. Catalyzes specifically the phosphorylation on 2'-hydroxyl of the adenosine moiety of NAD to yield NADP. The sequence is that of NAD kinase from Helicobacter pylori (strain HPAG1).